The following is a 304-amino-acid chain: Ornithine carbamoyltransferase (304 aa).

Carbamoyl phosphate is bound by residues 53-56 (STRT), Gln80, Arg104, and 131-134 (HPCQ). L-ornithine is bound by residues Asn162, Asp222, and 226-227 (SM). Residues 261–262 (CL) and Arg289 contribute to the carbamoyl phosphate site.

Belongs to the aspartate/ornithine carbamoyltransferase superfamily. OTCase family.

The protein resides in the cytoplasm. It catalyses the reaction carbamoyl phosphate + L-ornithine = L-citrulline + phosphate + H(+). The protein operates within amino-acid biosynthesis; L-arginine biosynthesis; L-arginine from L-ornithine and carbamoyl phosphate: step 1/3. In terms of biological role, reversibly catalyzes the transfer of the carbamoyl group from carbamoyl phosphate (CP) to the N(epsilon) atom of ornithine (ORN) to produce L-citrulline. The chain is Ornithine carbamoyltransferase from Rhizobium johnstonii (strain DSM 114642 / LMG 32736 / 3841) (Rhizobium leguminosarum bv. viciae).